Reading from the N-terminus, the 700-residue chain is Elongation factor G (700 aa).

In terms of domain architecture, tr-type G spans 8–290 (ERYRNIGISA…AVVEFMPSPV (283 aa)). GTP is bound by residues 17 to 24 (AHIDAGKT), 88 to 92 (DTPGH), and 142 to 145 (NKMD).

Belongs to the TRAFAC class translation factor GTPase superfamily. Classic translation factor GTPase family. EF-G/EF-2 subfamily.

It is found in the cytoplasm. In terms of biological role, catalyzes the GTP-dependent ribosomal translocation step during translation elongation. During this step, the ribosome changes from the pre-translocational (PRE) to the post-translocational (POST) state as the newly formed A-site-bound peptidyl-tRNA and P-site-bound deacylated tRNA move to the P and E sites, respectively. Catalyzes the coordinated movement of the two tRNA molecules, the mRNA and conformational changes in the ribosome. The sequence is that of Elongation factor G from Albidiferax ferrireducens (strain ATCC BAA-621 / DSM 15236 / T118) (Rhodoferax ferrireducens).